The following is a 3169-amino-acid chain: FRAS1-related extracellular matrix protein 2 (3169 aa).

The interval 1-24 (MHSAGTPGLSSRRTGNSTSFQPGP) is disordered. The N-terminal stretch at 1 to 46 (MHSAGTPGLSSRRTGNSTSFQPGPPPPPRLLLLLLLLLSLVSRVPA) is a signal peptide. A compositionally biased stretch (polar residues) spans 8 to 21 (GLSSRRTGNSTSFQ). The Extracellular segment spans residues 47–3113 (QPAAFGRALL…SPSSAVSLVT (3067 aa)). 12 CSPG repeats span residues 319-413 (KPSF…LELE), 438-537 (APVV…LRMV), 560-675 (PPVL…FRVQ), 700-807 (PPEL…FQVE), 828-919 (QPPE…LEVS), 945-1037 (HPTG…LSLS), 1066-1168 (APEI…FRCS), 1189-1282 (EQPE…IKLT), 1303-1399 (TPRM…FDVT), 1420-1512 (VFPD…FQVT), 1532-1621 (KKPV…FTVT), and 1655-1752 (VPQI…FAVE). N-linked (GlcNAc...) asparagine glycosylation is present at asparagine 358. N-linked (GlcNAc...) asparagine glycosylation is found at asparagine 1244 and asparagine 1369. Asparagine 1584 and asparagine 1741 each carry an N-linked (GlcNAc...) asparagine glycan. 5 consecutive Calx-beta domains span residues 1759-1858 (LTYQ…VVLS), 1871-1982 (ATVE…VLLS), 1997-2103 (QVTI…LVLR), 2118-2220 (VSIN…LVLG), and 2238-2342 (TLIR…VHLK). Residues 3036 to 3057 (SLVSQGKPQSTTKSRKKREIRS) are disordered. A compositionally biased stretch (polar residues) spans 3037–3047 (LVSQGKPQSTT). A helical transmembrane segment spans residues 3114–3134 (VVGGTTVGLLTICLTVIAVLM). Residues 3135–3169 (CRGKESFRGKDAPKGSSSSEPMVPPQSHHNDSSEV) lie on the Cytoplasmic side of the membrane. Positions 3141 to 3169 (FRGKDAPKGSSSSEPMVPPQSHHNDSSEV) are disordered.

This sequence belongs to the FRAS1 family. In terms of assembly, interacts with FREM1.

The protein resides in the cell membrane. Extracellular matrix protein required for maintenance of the integrity of the skin epithelium and for maintenance of renal epithelia. Required for epidermal adhesion. Involved in the development of eyelids and the anterior segment of the eyeballs. This is FRAS1-related extracellular matrix protein 2 (FREM2) from Homo sapiens (Human).